A 377-amino-acid polypeptide reads, in one-letter code: Succinyl-diaminopimelate desuccinylase (377 aa).

Position 68 (His-68) interacts with Zn(2+). The active site involves Asp-70. Asp-101 lines the Zn(2+) pocket. The Proton acceptor role is filled by Glu-135. Zn(2+) contacts are provided by Glu-136, Glu-164, and His-350.

Belongs to the peptidase M20A family. DapE subfamily. As to quaternary structure, homodimer. Requires Zn(2+) as cofactor. The cofactor is Co(2+).

It catalyses the reaction N-succinyl-(2S,6S)-2,6-diaminopimelate + H2O = (2S,6S)-2,6-diaminopimelate + succinate. Its pathway is amino-acid biosynthesis; L-lysine biosynthesis via DAP pathway; LL-2,6-diaminopimelate from (S)-tetrahydrodipicolinate (succinylase route): step 3/3. Functionally, catalyzes the hydrolysis of N-succinyl-L,L-diaminopimelic acid (SDAP), forming succinate and LL-2,6-diaminopimelate (DAP), an intermediate involved in the bacterial biosynthesis of lysine and meso-diaminopimelic acid, an essential component of bacterial cell walls. In Acinetobacter baumannii (strain SDF), this protein is Succinyl-diaminopimelate desuccinylase.